Here is a 740-residue protein sequence, read N- to C-terminus: ATP-dependent RNA helicase DDX1 (740 aa).

Positions 1 to 295 are necessary for interaction with HNRNPK; sequence MAAFSEMGVM…APKALIVEPS (295 aa). An interaction with dsRNA region spans residues 1-448; sequence MAAFSEMGVM…DTVHHVVVPV (448 aa). The necessary for interaction with RELA stretch occupies residues 1–525; the sequence is MAAFSEMGVM…KIDCDNLEQY (525 aa). The 427-residue stretch at 2–428 folds into the Helicase ATP-binding domain; the sequence is AAFSEMGVMP…SEKIMHFPTW (427 aa). Position 46-53 (46-53) interacts with ATP; sequence AETGSGKT. The 178-residue stretch at 70–247 folds into the B30.2/SPRY domain; sequence DQQEGKKGKT…LKFNFGEEEF (178 aa). N6-acetyllysine occurs at positions 239 and 268. Lys-281 carries the post-translational modification N6-acetyllysine; alternate. Lys-281 participates in a covalent cross-link: Glycyl lysine isopeptide (Lys-Gly) (interchain with G-Cter in SUMO2); alternate. Residues 370–373 carry the DEAD box motif; it reads DEAD. Ser-481 carries the post-translational modification Phosphoserine. One can recognise a Helicase C-terminal domain in the interval 493–681; it reads KGEYAVRAIK…QVEPDIKVPV (189 aa). Residues 525 to 740 form a necessary for interaction with HNRNPK region; the sequence is YFMQQGGGPD…YLPNQLFRTF (216 aa).

It belongs to the DEAD box helicase family. DDX1 subfamily. As to quaternary structure, found in a multi-helicase-TICAM1 complex at least composed of DHX36, DDX1, DDX21 and TICAM1; this complex exists in resting cells with or without poly(I:C) RNA ligand stimulation. Interacts with DHX36. Interacts (via B30.2/SPRY domain) with DDX21 (via N-terminus); this interaction serves as bridges to TICAM1. Interacts with FAM98A (via N- and C-terminus). Interacts with PHF5A (via C-terminus). Interacts with MBNL1. Interacts with CSTF2. Interacts with HNRNPK. Interacts with ATM. Interacts with RELA (via C-terminus). Component of the tRNA-splicing ligase complex. Interacts with PQBP1. Interacts with ERCC6. In terms of processing, phosphorylated by ATM kinase; phosphorylation is increased in response to ionizing radiation (IR).

The protein resides in the nucleus. The protein localises to the cytoplasm. It is found in the cytoplasmic granule. Its subcellular location is the cytosol. It localises to the mitochondrion. The catalysed reaction is ATP + H2O = ADP + phosphate + H(+). In terms of biological role, acts as an ATP-dependent RNA helicase, able to unwind both RNA-RNA and RNA-DNA duplexes. Possesses 5' single-stranded RNA overhang nuclease activity. Possesses ATPase activity on various RNA, but not DNA polynucleotides. May play a role in RNA clearance at DNA double-strand breaks (DSBs), thereby facilitating the template-guided repair of transcriptionally active regions of the genome. Together with RELA, acts as a coactivator to enhance NF-kappa-B-mediated transcriptional activation. Acts as a positive transcriptional regulator of cyclin CCND2 expression. Binds to the cyclin CCND2 promoter region. Associates with chromatin at the NF-kappa-B promoter region via association with RELA. Binds to poly(A) RNA. May be involved in 3'-end cleavage and polyadenylation of pre-mRNAs. Component of the tRNA-splicing ligase complex required to facilitate the enzymatic turnover of catalytic subunit RTCB: together with archease (ZBTB8OS), acts by facilitating the guanylylation of RTCB, a key intermediate step in tRNA ligation. Component of a multi-helicase-TICAM1 complex that acts as a cytoplasmic sensor of viral double-stranded RNA (dsRNA) and plays a role in the activation of a cascade of antiviral responses including the induction of pro-inflammatory cytokines via the adapter molecule TICAM1. Specifically binds (via helicase ATP-binding domain) on both short and long poly(I:C) dsRNA. In Macaca fascicularis (Crab-eating macaque), this protein is ATP-dependent RNA helicase DDX1 (DDX1).